Here is a 365-residue protein sequence, read N- to C-terminus: Probable cinnamyl alcohol dehydrogenase (365 aa).

Residue cysteine 47 coordinates Zn(2+). Threonine 49 is a binding site for NADP(+). The Zn(2+) site is built by histidine 69, glutamate 70, cysteine 100, cysteine 103, cysteine 106, cysteine 114, and cysteine 163. Residues threonine 167, 188–193 (GLGGVG), 211–216 (SSSSKK), threonine 251, glycine 275, and 298–300 (SFI) each bind NADP(+).

Belongs to the zinc-containing alcohol dehydrogenase family. In terms of assembly, homodimer. Zn(2+) is required as a cofactor.

It catalyses the reaction (E)-cinnamyl alcohol + NADP(+) = (E)-cinnamaldehyde + NADPH + H(+). The catalysed reaction is (E)-coniferol + NADP(+) = (E)-coniferaldehyde + NADPH + H(+). The enzyme catalyses (E)-sinapyl alcohol + NADP(+) = (E)-sinapaldehyde + NADPH + H(+). It carries out the reaction (E)-4-coumaroyl alcohol + NADP(+) = (E)-4-coumaraldehyde + NADPH + H(+). It catalyses the reaction (E)-caffeyl alcohol + NADP(+) = (E)-caffeyl aldehyde + NADPH + H(+). It participates in aromatic compound metabolism; phenylpropanoid biosynthesis. Its function is as follows. Involved in lignin biosynthesis. Catalyzes the final step specific for the production of lignin monomers. Catalyzes the NADPH-dependent reduction of coniferaldehyde, 5-hydroxyconiferaldehyde, sinapaldehyde, 4-coumaraldehyde and caffeyl aldehyde to their respective alcohols. In Saccharum officinarum (Sugarcane), this protein is Probable cinnamyl alcohol dehydrogenase (CAD).